A 191-amino-acid polypeptide reads, in one-letter code: Shikimate kinase (191 aa).

An ATP-binding site is contributed by glycine 24–serine 29. Threonine 28 provides a ligand contact to Mg(2+). Residues aspartate 46, arginine 70, and glycine 92 each contribute to the substrate site. Residue arginine 130 participates in ATP binding. Arginine 149 contributes to the substrate binding site.

This sequence belongs to the shikimate kinase family. Monomer. Mg(2+) serves as cofactor.

Its subcellular location is the cytoplasm. It catalyses the reaction shikimate + ATP = 3-phosphoshikimate + ADP + H(+). Its pathway is metabolic intermediate biosynthesis; chorismate biosynthesis; chorismate from D-erythrose 4-phosphate and phosphoenolpyruvate: step 5/7. In terms of biological role, catalyzes the specific phosphorylation of the 3-hydroxyl group of shikimic acid using ATP as a cosubstrate. In Parasynechococcus marenigrum (strain WH8102), this protein is Shikimate kinase.